A 321-amino-acid polypeptide reads, in one-letter code: 4-hydroxy-3-methylbut-2-enyl diphosphate reductase (321 aa).

Cys12 contributes to the [4Fe-4S] cluster binding site. Residues His41 and His74 each coordinate (2E)-4-hydroxy-3-methylbut-2-enyl diphosphate. Dimethylallyl diphosphate contacts are provided by His41 and His74. Isopentenyl diphosphate is bound by residues His41 and His74. [4Fe-4S] cluster is bound at residue Cys96. Residue His124 coordinates (2E)-4-hydroxy-3-methylbut-2-enyl diphosphate. A dimethylallyl diphosphate-binding site is contributed by His124. His124 contacts isopentenyl diphosphate. The active-site Proton donor is Glu126. Thr167 provides a ligand contact to (2E)-4-hydroxy-3-methylbut-2-enyl diphosphate. Residue Cys197 participates in [4Fe-4S] cluster binding. (2E)-4-hydroxy-3-methylbut-2-enyl diphosphate contacts are provided by Ser225, Ser226, Asn227, and Ser269. Ser225, Ser226, Asn227, and Ser269 together coordinate dimethylallyl diphosphate. Ser225, Ser226, Asn227, and Ser269 together coordinate isopentenyl diphosphate.

Belongs to the IspH family. In terms of assembly, homodimer. The cofactor is [4Fe-4S] cluster.

It catalyses the reaction isopentenyl diphosphate + 2 oxidized [2Fe-2S]-[ferredoxin] + H2O = (2E)-4-hydroxy-3-methylbut-2-enyl diphosphate + 2 reduced [2Fe-2S]-[ferredoxin] + 2 H(+). The enzyme catalyses dimethylallyl diphosphate + 2 oxidized [2Fe-2S]-[ferredoxin] + H2O = (2E)-4-hydroxy-3-methylbut-2-enyl diphosphate + 2 reduced [2Fe-2S]-[ferredoxin] + 2 H(+). It functions in the pathway isoprenoid biosynthesis; dimethylallyl diphosphate biosynthesis; dimethylallyl diphosphate from (2E)-4-hydroxy-3-methylbutenyl diphosphate: step 1/1. Its pathway is isoprenoid biosynthesis; isopentenyl diphosphate biosynthesis via DXP pathway; isopentenyl diphosphate from 1-deoxy-D-xylulose 5-phosphate: step 6/6. Functionally, catalyzes the conversion of 1-hydroxy-2-methyl-2-(E)-butenyl 4-diphosphate (HMBPP) into a mixture of isopentenyl diphosphate (IPP) and dimethylallyl diphosphate (DMAPP). Acts in the terminal step of the DOXP/MEP pathway for isoprenoid precursor biosynthesis. This is 4-hydroxy-3-methylbut-2-enyl diphosphate reductase from Escherichia coli O6:K15:H31 (strain 536 / UPEC).